The following is a 366-amino-acid chain: Transaldolase (366 aa).

The Schiff-base intermediate with substrate role is filled by lysine 140.

This sequence belongs to the transaldolase family. Type 2 subfamily.

Its subcellular location is the cytoplasm. It carries out the reaction D-sedoheptulose 7-phosphate + D-glyceraldehyde 3-phosphate = D-erythrose 4-phosphate + beta-D-fructose 6-phosphate. It participates in carbohydrate degradation; pentose phosphate pathway; D-glyceraldehyde 3-phosphate and beta-D-fructose 6-phosphate from D-ribose 5-phosphate and D-xylulose 5-phosphate (non-oxidative stage): step 2/3. Its function is as follows. Transaldolase is important for the balance of metabolites in the pentose-phosphate pathway. This chain is Transaldolase, found in Saccharopolyspora erythraea (strain ATCC 11635 / DSM 40517 / JCM 4748 / NBRC 13426 / NCIMB 8594 / NRRL 2338).